Reading from the N-terminus, the 327-residue chain is GMP reductase (327 aa).

The active-site Thioimidate intermediate is cysteine 176. 205–228 provides a ligand contact to NADP(+); that stretch reads IIADGGIRTHGDIAKSIRFGASMV.

It belongs to the IMPDH/GMPR family. GuaC type 2 subfamily.

It carries out the reaction IMP + NH4(+) + NADP(+) = GMP + NADPH + 2 H(+). Its function is as follows. Catalyzes the irreversible NADPH-dependent deamination of GMP to IMP. It functions in the conversion of nucleobase, nucleoside and nucleotide derivatives of G to A nucleotides, and in maintaining the intracellular balance of A and G nucleotides. This chain is GMP reductase, found in Streptococcus gordonii (strain Challis / ATCC 35105 / BCRC 15272 / CH1 / DL1 / V288).